The following is a 65-amino-acid chain: Large ribosomal subunit protein bL28 (65 aa).

This sequence belongs to the bacterial ribosomal protein bL28 family.

The sequence is that of Large ribosomal subunit protein bL28 from Bifidobacterium animalis subsp. lactis (strain AD011).